The sequence spans 227 residues: MCGRFTLYSAFDDIIDQFDIDQFFPKGEYQPSYNVAPSQNILAIINDGSNNRLGKLRWGLIPPWAKDEKIGYKMINARAETITEKPAFRRPLVSKRCIIPADSFYEWKRLDSKTKIPMRIKLKSSALFAFAGLYEKWSTHQGYPLYTCTIITTEPNEFMKDIHDRMPVILAHDHEKEWLNPKNTSPDYLQSLLLPYDADDMEAYQVSSLVNSPKNNSAELLDAENHM.

Residue cysteine 2 is the Nucleophile of the active site. Cysteine 2 carries the post-translational modification Thiazolidine linkage to a ring-opened DNA abasic site. The active site involves glutamate 106.

It belongs to the SOS response-associated peptidase family.

Its activity is regulated as follows. Formation and reversal of DNA-protein cross-link depends on DNA context. Catalyzes formation of the thiazolidine linkage in presence of abasic sites in single-stranded DNA. Mediates the reversal of the thiazolidine cross-link in presence of double stranded DNA. Its function is as follows. Sensor of abasic sites in single-stranded DNA (ssDNA) required to preserve genome integrity by promoting error-free repair of abasic sites. Recognizes and binds abasic sites in ssDNA at replication forks and chemically modifies the lesion by forming a covalent cross-link with DNA: forms a stable thiazolidine linkage between a ring-opened abasic site and the alpha-amino and sulfhydryl substituents of its N-terminal catalytic cysteine residue. The DNA-protein cross-link is then reversed: able to catalyze the reversal of the thiazolidine cross-link and cycle between a cross-link and a non-cross-linked state depending on DNA context: mediates self-reversal of the thiazolidine cross-link in double stranded DNA. May act as a protease: mediates autocatalytic processing of its N-terminal methionine in order to expose the catalytic cysteine. The sequence is that of Abasic site processing protein YoaM (yoaM) from Bacillus subtilis (strain 168).